The chain runs to 249 residues: MDGEEDSEWMMMDVGGKGGKGGGGGGAADRKKRFSEEQIKSLESMFATQTKLEPRQKLQLARELGLQPRQVAIWFQNKRARWKSKQLEREYSALRDDYDALLCSYESLKKEKLALIKQLEKLAEMLQEPRGKYGDNAGDDARSGGVAGMKKEEFVGAGGAATLYSSAEGGGTTTTTTAKLMPHFGSDDVDAGLFLRPSSQHHPPPPHAGAGFTSSEPAADHQSFNFHSSWPSSTEQTCSSTPWWEFESE.

Positions 1–32 (MDGEEDSEWMMMDVGGKGGKGGGGGGAADRKK) are disordered. Residues 15-27 (GGKGGKGGGGGGA) show a composition bias toward gly residues. A DNA-binding region (homeobox) is located at residues 27–86 (AADRKKRFSEEQIKSLESMFATQTKLEPRQKLQLARELGLQPRQVAIWFQNKRARWKSKQ). Positions 85 to 129 (KQLEREYSALRDDYDALLCSYESLKKEKLALIKQLEKLAEMLQEP) are leucine-zipper. The segment at 194 to 249 (FLRPSSQHHPPPPHAGAGFTSSEPAADHQSFNFHSSWPSSTEQTCSSTPWWEFESE) is disordered. Polar residues predominate over residues 212–242 (FTSSEPAADHQSFNFHSSWPSSTEQTCSSTP).

It belongs to the HD-ZIP homeobox family. Class I subfamily. As to expression, expressed in seedlings, roots, leaves, nodes, internodes, flowers and embryo.

The protein resides in the nucleus. Probable transcription factor that binds to the DNA sequence 5'-CAAT[AT]ATTG-3'. In Oryza sativa subsp. indica (Rice), this protein is Homeobox-leucine zipper protein HOX6 (HOX6).